Reading from the N-terminus, the 177-residue chain is ATP synthase subunit b, chloroplastic (177 aa).

A helical membrane pass occupies residues 26–44 (IINLSIVLFVVIRFLGEAL).

This sequence belongs to the ATPase B chain family. As to quaternary structure, F-type ATPases have 2 components, F(1) - the catalytic core - and F(0) - the membrane proton channel. F(1) has five subunits: alpha(3), beta(3), gamma(1), delta(1), epsilon(1). F(0) has four main subunits: a(1), b(1), b'(1) and c(10-14). The alpha and beta chains form an alternating ring which encloses part of the gamma chain. F(1) is attached to F(0) by a central stalk formed by the gamma and epsilon chains, while a peripheral stalk is formed by the delta, b and b' chains.

It localises to the plastid. The protein resides in the chloroplast thylakoid membrane. Functionally, f(1)F(0) ATP synthase produces ATP from ADP in the presence of a proton or sodium gradient. F-type ATPases consist of two structural domains, F(1) containing the extramembraneous catalytic core and F(0) containing the membrane proton channel, linked together by a central stalk and a peripheral stalk. During catalysis, ATP synthesis in the catalytic domain of F(1) is coupled via a rotary mechanism of the central stalk subunits to proton translocation. Its function is as follows. Component of the F(0) channel, it forms part of the peripheral stalk, linking F(1) to F(0). The sequence is that of ATP synthase subunit b, chloroplastic from Bigelowiella natans (Pedinomonas minutissima).